The following is a 218-amino-acid chain: Ribose-5-phosphate isomerase A (218 aa).

Substrate-binding positions include 28–31, 81–84, and 94–97; these read TGST, DGAD, and KGGG. The Proton acceptor role is filled by glutamate 103. Residue lysine 121 coordinates substrate.

This sequence belongs to the ribose 5-phosphate isomerase family. As to quaternary structure, homodimer.

It carries out the reaction aldehydo-D-ribose 5-phosphate = D-ribulose 5-phosphate. The protein operates within carbohydrate degradation; pentose phosphate pathway; D-ribose 5-phosphate from D-ribulose 5-phosphate (non-oxidative stage): step 1/1. Catalyzes the reversible conversion of ribose-5-phosphate to ribulose 5-phosphate. In Vibrio cholerae serotype O1 (strain ATCC 39541 / Classical Ogawa 395 / O395), this protein is Ribose-5-phosphate isomerase A.